Consider the following 675-residue polypeptide: Vitamin K-dependent protein S (675 aa).

The N-terminal stretch at 1–24 (MRVLSVRFRVLLACLALVLPNSET) is a signal peptide. The propeptide occupies 25–41 (NFLSKERASQVLVRKRR). A Gla domain is found at 42–87 (ANTLLEETKKGNLERECIEELCNKEEAREVFENNPETDYFYPKYLG). Glutamate 47, glutamate 48, glutamate 55, glutamate 57, glutamate 60, glutamate 61, glutamate 66, glutamate 67, glutamate 70, glutamate 73, and glutamate 77 each carry 4-carboxyglutamate. Cysteine 58 and cysteine 63 are oxidised to a cystine. Residues 88-116 (CLGAFRVGAFSAARQSANAYPDLRSCVNA) form a thrombin-sensitive region. Residues 117-155 (IPDQCDPMPCNEDGYLSCKDGQGAFTCICKPGWQGDKCQ) enclose the EGF-like 1 domain. 13 cysteine pairs are disulfide-bonded: cysteine 121-cysteine 134, cysteine 126-cysteine 143, cysteine 145-cysteine 154, cysteine 161-cysteine 175, cysteine 171-cysteine 184, cysteine 186-cysteine 199, cysteine 205-cysteine 217, cysteine 212-cysteine 226, cysteine 228-cysteine 241, cysteine 247-cysteine 256, cysteine 252-cysteine 265, cysteine 267-cysteine 282, and cysteine 449-cysteine 475. Position 136 is a (3R)-3-hydroxyaspartate (aspartate 136). The EGF-like 2; calcium-binding domain occupies 157–200 (DINECKDPSNINGGCSQTCDNTPGSYHCSCKIGFAMLTNKKDCK). One can recognise an EGF-like 3; calcium-binding domain in the interval 201-242 (DVDECSLKPSVCGTAVCKNIPGDFECECPNGYRYDPSSKSCK). The EGF-like 4; calcium-binding domain occupies 243–283 (DVDECSENTCAQLCVNYPGGYSCYCDGKKGFKLAQDQRSCE). Laminin G-like domains are found at residues 299–475 (LLYL…NKHC) and 484–665 (YYPG…AHSC). N-linked (GlcNAc...) asparagine glycans are attached at residues asparagine 499 and asparagine 509.

In terms of processing, the iron and 2-oxoglutarate dependent 3-hydroxylation of aspartate and asparagine is (R) stereospecific within EGF domains. In terms of tissue distribution, plasma.

It is found in the secreted. Its function is as follows. Anticoagulant plasma protein; it is a cofactor to activated protein C in the degradation of coagulation factors Va and VIIIa. It helps to prevent coagulation and stimulating fibrinolysis. The chain is Vitamin K-dependent protein S (Pros1) from Rattus norvegicus (Rat).